A 215-amino-acid polypeptide reads, in one-letter code: Octanoyltransferase (215 aa).

A BPL/LPL catalytic domain is found at 31–206; sequence TSAEDEIWLV…QLVKHLDYAE (176 aa). Substrate contacts are provided by residues 70-77, 137-139, and 150-152; these read RGGQVTYH, SLG, and GLA. Residue cysteine 168 is the Acyl-thioester intermediate of the active site.

It belongs to the LipB family.

It localises to the cytoplasm. It catalyses the reaction octanoyl-[ACP] + L-lysyl-[protein] = N(6)-octanoyl-L-lysyl-[protein] + holo-[ACP] + H(+). It participates in protein modification; protein lipoylation via endogenous pathway; protein N(6)-(lipoyl)lysine from octanoyl-[acyl-carrier-protein]: step 1/2. Catalyzes the transfer of endogenously produced octanoic acid from octanoyl-acyl-carrier-protein onto the lipoyl domains of lipoate-dependent enzymes. Lipoyl-ACP can also act as a substrate although octanoyl-ACP is likely to be the physiological substrate. This is Octanoyltransferase from Pseudomonas fluorescens (strain SBW25).